Consider the following 533-residue polypeptide: Frizzled/smoothened-like sans CRD protein H (533 aa).

Positions 1-21 (MFIKFYFFIIFLILNFKNNYA) are cleaved as a signal peptide. Topologically, residues 22–103 (SPTLLDSVLS…GDWTTMMDMS (82 aa)) are extracellular. N76 carries N-linked (GlcNAc...) asparagine glycosylation. The chain crosses the membrane as a helical span at residues 104–124 (LIVATISFFASIFLILTYSPL). The Cytoplasmic segment spans residues 125–134 (MNPSYNNRHT). Residues 135 to 155 (IGILSMSFGIFLIMFTDMYNL) form a helical membrane-spanning segment. At 156-177 (KKRFTLGCPSETRYAIQNDADC) the chain is on the extracellular side. The helical transmembrane segment at 178–198 (LITGLIFQFGCVSAVFFWTAL) threads the bilayer. The Cytoplasmic segment spans residues 199–216 (SLDLYFQITNRNISRKYD). A helical membrane pass occupies residues 217-237 (LYYFIGVNLISLIFTFVPVIS). The Extracellular segment spans residues 238–259 (KSYGYGDFALGCWILDFNYALG). A helical transmembrane segment spans residues 260–280 (CFWIPLSVCLIFSTVVVLMIL). Topologically, residues 281–302 (YEVYKIYKASNQKTSLKGHIKP) are cytoplasmic. A helical membrane pass occupies residues 303–323 (LLCLISNCFEFFYVFGYSLYL). Over 324–360 (ATKLTELHDNMDAYIKCLFLNSQNDPDSYTCPDHRLK) the chain is Extracellular. A helical transmembrane segment spans residues 361-381 (LGPQFLFFLSLRLLGVSGIVF). At 382-533 (YGTNSKVRKI…LTNINTIDNV (152 aa)) the chain is on the cytoplasmic side. The tract at residues 454–533 (IIVTPGGDDD…LTNINTIDNV (80 aa)) is disordered. The span at 466 to 518 (NNNNNNNNNNNNNNNNNNNNNNNNNNNNNNNNNNNNNNNNNNNNNSNENNENN) shows a compositional bias: low complexity. Residues 501-528 (NNNNNNNNNNSNENNENNTQEIELTNIN) adopt a coiled-coil conformation. Positions 519 to 533 (TQEIELTNINTIDNV) are enriched in polar residues.

It belongs to the G-protein coupled receptor Fz/Smo family.

It localises to the membrane. The polypeptide is Frizzled/smoothened-like sans CRD protein H (fscH) (Dictyostelium discoideum (Social amoeba)).